A 393-amino-acid chain; its full sequence is Acyltransferase ato1 (393 aa).

The protein belongs to the lysine N-acyltransferase mbtK family.

It functions in the pathway siderophore biosynthesis; ferrichrome biosynthesis. Functionally, L-ornithine N(5)-monooxygenase; part of the siderophore biosynthetic pathway. Omphalotus olearius produces ferrichrome A, but no other siderophore has been detected. Ferrichrome A consists of a hexapeptide ring made up of one glycine, two serine, and three N(5)-hydroxyornithine amino acid residues, the latter acylated by trans-(alpha-methyl)-glutaconic acid residues. The biosynthesis of ferrichrome A depends on the hydroxylation of ornithine to N(5)-hydroxyornithine, catalyzed by the monooxygenase omo1. The second step, the acylation of N(5)-hydroxy-L-ornithine is probably catalyzed by the N-acyltransferase ato1. Finally, assembly of ferrichrome A is catalyzed by the nonribosomal peptide synthase (NRPS) fso1. This Omphalotus olearius (Jack o'lantern) protein is Acyltransferase ato1.